An 89-amino-acid chain; its full sequence is Small ribosomal subunit protein uS15 (89 aa).

The span at M1–V11 shows a compositional bias: basic and acidic residues. The disordered stretch occupies residues M1 to S24.

Belongs to the universal ribosomal protein uS15 family. In terms of assembly, part of the 30S ribosomal subunit. Forms a bridge to the 50S subunit in the 70S ribosome, contacting the 23S rRNA.

Its function is as follows. One of the primary rRNA binding proteins, it binds directly to 16S rRNA where it helps nucleate assembly of the platform of the 30S subunit by binding and bridging several RNA helices of the 16S rRNA. Forms an intersubunit bridge (bridge B4) with the 23S rRNA of the 50S subunit in the ribosome. In Bradyrhizobium diazoefficiens (strain JCM 10833 / BCRC 13528 / IAM 13628 / NBRC 14792 / USDA 110), this protein is Small ribosomal subunit protein uS15.